The sequence spans 977 residues: MPARWLLLLLALLLPPPGPGSFGRTSTVTLPETLLFVSTLDGSLHAVSKRTGSIKWTLKEDPVLQVPTHVEEPAFLPDPNDGSLYTLGGKNNEGLTKLPFTIPELVQASPCRSSDGILYMGKKQDIWYVIDLLTGEKQQTLSSAFADSLCPSTSLLYLGRTEYTITMYDTKTRELRWNATYFDYAASLPEDDVDYKMSHFVSNGDGLVVTVDSESGDVLWIQNYASPVVAFYVWQGEVLRKVVHINVAVETLRYLTFMSGEVGRITKWKYPFPKETEAKSKLTPTLYVGKYSTSLYASPSMVHEGVAVVPRGSTLPLLEGPQTDGVTIGDKGECVITPSTDLKFDPGLKGKSKLNYLRNYWLLIGHHETPLSASTKMLERFPNNLPKHRENVIPADSEKRSFEEVINIVGQTSDNTPTTVSQDVEEKLARAPAKPEAPVDSMLKDMATIILSTFLLVGWVAFIITYPLSVHQQRQLQHQQFQKELEKIQLLQQQQLPFHPHGDLTQDPEFLDSSGPFSESSGTSSPSPSPRASNHSLHPSSSASRAGTSPSLEQDDEDEETRMVIVGKISFCPKDVLGHGAEGTIVYKGMFDNRDVAVKRILPECFSFADREVQLLRESDEHPNVIRYFCTEKDRQFQYIAIELCAATLQEYVEQKDFAHLGLEPITLLHQTTSGLAHLHSLNIVHRDLKPHNILLSMPNAHGRIKAMISDFGLCKKLAVGRHSFSRRSGVPGTEGWIAPEMLSEDCKDNPTYTVDIFSAGCVFYYVISEGNHPFGKSLQRQANILLGACNLDCFHSDKHEDVIARELIEKMIAMDPQQRPSAKHVLKHPFFWSLEKQLQFFQDVSDRIEKEALDGPIVRQLERGGRAVVKMDWRENITVPLQTDLRKFRTYKGGSVRDLLRAMRNKKHHYRELPVEVQETLGSIPDDFVRYFTSRFPHLLSHTYQAMELCRHERLFQTYYWHEPTEPQPPVIPYAL.

The first 20 residues, methionine 1 to glycine 20, serve as a signal peptide directing secretion. The Lumenal segment spans residues serine 21–aspartate 445. Asparagine 178 carries N-linked (GlcNAc...) asparagine glycosylation. Residues methionine 446 to tyrosine 466 form a helical membrane-spanning segment. Residues proline 467–leucine 977 are Cytoplasmic-facing. The interval phenylalanine 498 to glutamate 559 is disordered. Low complexity predominate over residues serine 513 to serine 551. The 262-residue stretch at phenylalanine 571–phenylalanine 832 folds into the Protein kinase domain. ATP contacts are provided by residues leucine 577–isoleucine 585, lysine 599, and glutamate 643–cysteine 645. Aspartate 688 functions as the Proton acceptor; for protein kinase activity in the catalytic mechanism. Residues lysine 690–asparagine 693 and aspartate 711 contribute to the ATP site. A phosphoserine mark is found at serine 724 and serine 729. Residues leucine 835–histidine 963 form the KEN domain. The interacts with hydroxy-aryl-aldehyde inhibitors stretch occupies residues asparagine 906–lysine 907.

This sequence belongs to the protein kinase superfamily. Ser/Thr protein kinase family. In terms of assembly, monomer. Homodimer; disulfide-linked; homodimerization takes place in response to endoplasmic reticulum stress and promotes activation of the kinase and endoribonuclease activities. Dimer formation is driven by hydrophobic interactions within the N-terminal luminal domains and stabilized by disulfide bridges. Interacts (via the luminal region) with DNAJB9/ERdj4; interaction takes place in unstressed cells and promotes recruitment of HSPA5/BiP. Interacts (via the luminal region) with HSPA5/BiP; HSPA5/BiP is a negative regulator of the unfolded protein response (UPR) that prevents homodimerization of ERN1/IRE1 and subsequent activation of the protein. Interaction with HSPA5 also competitively inhibits ERN1 interaction with MANF. Interacts with PDIA6, a negative regulator of the UPR; the interaction is direct and disrupts homodimerization. Interacts with DAB2IP (via PH domain); the interaction occurs in a endoplasmic reticulum stress-induced dependent manner and is required for subsequent recruitment of TRAF2 to ERN1/IRE1. Interacts with TAOK3 and TRAF2. Interacts with RNF13. Interacts with LACC1. Interacts (when unphosphorylated) with DDRGK1; interaction is dependent on UFM1 and takes place in response to endoplasmic reticulum stress, regulating ERN1/IRE1-alpha stability. Interacts (via N-terminus) with P4HB/PDIA1; the interaction is enhanced by phosphorylation of P4HB by FAM20C in response to endoplasmic reticulum stress and results in attenuation of ERN1 activity. Interacts with TMBIM6; this interaction inhibits ERN1 activity. Interacts (via luminal domain) with MANF (via C-terminus); the interaction is decreased in the presence of increasing concentrations of Ca(2+). It depends on Mg(2+) as a cofactor. In terms of processing, autophosphorylated following homodimerization. Autophosphorylation promotes activation of the endoribonuclease domain. In response to ER stress, phosphorylated at Ser-724, Ser-729 and possibly Ser-726; phosphorylation promotes oligomerization and endoribonuclease activity. Dephosphorylated at Ser-724, Ser-729 and possibly Ser-726 by RPAP2 to abort failed ER-stress adaptation and trigger apoptosis. Phosphorylated at Ser-724; in response to the ER stressor tunicamycin. Post-translationally, ADP-ribosylated by PARP16 upon ER stress, which increases both kinase and endonuclease activities. In terms of tissue distribution, expressed in liver (at protein level). Ubiquitously expressed. High levels in thymus, liver and lung. In the brain, preferentially expressed in cortical, hippocampal and olfactory neurons.

Its subcellular location is the endoplasmic reticulum membrane. The enzyme catalyses L-seryl-[protein] + ATP = O-phospho-L-seryl-[protein] + ADP + H(+). It carries out the reaction L-threonyl-[protein] + ATP = O-phospho-L-threonyl-[protein] + ADP + H(+). The kinase domain is activated by trans-autophosphorylation following homodimerization. Kinase activity is required for activation of the endoribonuclease domain. Endoribonuclease activity is specifically inhibited by hydroxy-aryl-aldehydes (HAA) MKC9989, OICR464 and OICR573. Its function is as follows. Serine/threonine-protein kinase and endoribonuclease that acts as a key sensor for the endoplasmic reticulum unfolded protein response (UPR). In unstressed cells, the endoplasmic reticulum luminal domain is maintained in its inactive monomeric state by binding to the endoplasmic reticulum chaperone HSPA5/BiP. Accumulation of misfolded protein in the endoplasmic reticulum causes release of HSPA5/BiP, allowing the luminal domain to homodimerize, promoting autophosphorylation of the kinase domain and subsequent activation of the endoribonuclease activity. The endoribonuclease activity is specific for XBP1 mRNA and excises 26 nucleotides from XBP1 mRNA. The resulting spliced transcript of XBP1 encodes a transcriptional activator protein that up-regulates expression of UPR target genes. Acts as an upstream signal for ER stress-induced GORASP2-mediated unconventional (ER/Golgi-independent) trafficking of CFTR to cell membrane by modulating the expression and localization of SEC16A. The polypeptide is Serine/threonine-protein kinase/endoribonuclease IRE1 (Mus musculus (Mouse)).